The chain runs to 51 residues: Structural protein ORF5a (51 aa).

Residues 11 to 28 (RGLLLAIAFFVVYRAVLF) traverse the membrane as a helical segment.

It belongs to the arteriviridae ORF5a protein family. As to quaternary structure, interacts with GP2b and GP4.

The protein localises to the virion. It localises to the host cell membrane. Functionally, minor virion component that plays an essential role in virus infectivity. In Porcine reproductive and respiratory syndrome virus (strain VR-2332) (PRRSV), this protein is Structural protein ORF5a.